The chain runs to 222 residues: DnaJ homolog subfamily B member 9 (222 aa).

Positions 1-23 (MATPQSVFVFAICILMITELILA) are cleaved as a signal peptide. A J domain is found at 26-90 (SYYDILGVPK…NSRKEYDTIG (65 aa)). The tract at residues 91 to 222 (HSAFTNGKGQ…VTTYTDCSGQ (132 aa)) is divergent targeting domain. Position 133 is a phosphoserine (serine 133).

Interacts with HSPA5/BiP; interaction is direct. Interacts with ERN1/IRE1 (via the luminal region). Interacts with DERL1. Not N-glycosylated.

The protein localises to the endoplasmic reticulum lumen. In terms of biological role, co-chaperone for Hsp70 protein HSPA5/BiP that acts as a key repressor of the ERN1/IRE1-mediated unfolded protein response (UPR). J domain-containing co-chaperones stimulate the ATPase activity of Hsp70 proteins and are required for efficient substrate recognition by Hsp70 proteins. In the unstressed endoplasmic reticulum, interacts with the luminal region of ERN1/IRE1 and selectively recruits HSPA5/BiP: HSPA5/BiP disrupts the dimerization of the active ERN1/IRE1 luminal region, thereby inactivating ERN1/IRE1. Also involved in endoplasmic reticulum-associated degradation (ERAD) of misfolded proteins. Required for survival of B-cell progenitors and normal antibody production. The polypeptide is DnaJ homolog subfamily B member 9 (Mus musculus (Mouse)).